Reading from the N-terminus, the 1476-residue chain is Cystic fibrosis transmembrane conductance regulator (1476 aa).

At 1 to 77 (MQKSPLEKAS…QLIHALRRCF (77 aa)) the chain is on the cytoplasmic side. The chain crosses the membrane as a helical span at residues 78 to 98 (VWRFVFYGVLLYLGEVTKAVQ). The ABC transmembrane type-1 1 domain maps to 81-365 (FVFYGVLLYL…TAVQIWYDSL (285 aa)). Over 99 to 122 (PVLLGRIIASYDPDNTEERSIAIY) the chain is Extracellular. A helical transmembrane segment spans residues 123-146 (LGIGLCLLFIVRTLLLHPAIFGLH). Residues 147 to 195 (HIGMQMRIAMFSLIYKKTLKLSSRVLDKISIGQLISLLSNNLNKFDEGL) lie on the Cytoplasmic side of the membrane. The chain crosses the membrane as a helical span at residues 196 to 216 (ALAHFIWIAPLQVVLLMGLLW). Over 217-222 (DLLQFS) the chain is Extracellular. The chain crosses the membrane as a helical span at residues 223 to 243 (AFCGLGLLIVLVIFQAILGKM). At 244 to 298 (MVKYRDKRAAKINERLVITSEVIDNIYSVKAYCWESAMEKIIESLREEELKMTRR) the chain is on the cytoplasmic side. A helical transmembrane segment spans residues 299–319 (SAYMRFFTSSAFFFSGFFVVF). Over 320 to 339 (LSVLPYTVINGIVLRKIFTT) the chain is Extracellular. A helical transmembrane segment spans residues 340–358 (ISFCIVLRMSVTRQFPTAV). At 359 to 853 (QIWYDSLGMI…YLRYFTLHRG (495 aa)) the chain is on the cytoplasmic side. Residues Trp-401, 458–465 (GSTGAGKT), and Gln-493 each bind ATP. In terms of domain architecture, ABC transporter 1 spans 412–646 (VQLNNDDRKT…RPDFSSKLMG (235 aa)). A lipid anchor (S-palmitoyl cysteine) is attached at Cys-524. 2 positions are modified to phosphoserine: Ser-549 and Ser-660. The tract at residues 654–826 (TEERRSSILT…EEINEEDLKE (173 aa)) is disordered R region. Ser-670 bears the Phosphoserine; by PKA mark. Residues Ser-684, Ser-698, and Ser-710 each carry the phosphoserine modification. Thr-715 carries the phosphothreonine modification. Phosphoserine is present on residues Ser-732, Ser-763, Ser-785, Ser-790, and Ser-808. A helical membrane pass occupies residues 854–874 (LFAVLIWCVLVFLVEVAASLF). One can recognise an ABC transmembrane type-1 2 domain in the interval 854 to 1153 (LFAVLIWCVL…SSIDTDSLMR (300 aa)). The Extracellular portion of the chain corresponds to 875 to 913 (VLWLLKNNPVNGGNNGTKIANTSYVVVITSSSFYYIFYI). N-linked (GlcNAc...) asparagine glycans are attached at residues Asn-889 and Asn-895. Residues 914–934 (YVGVADTLLALSLFRGLPLVH) form a discontinuously helical membrane-spanning segment. Residues 935-985 (TLITASKILHRKMLHSILHAPMSTFNKLKAGGILNRFSKDIAILDDFLPLT) lie on the Cytoplasmic side of the membrane. Residues 986 to 1006 (IFDFIQLLFIVVGAIIVVSAL) form a helical membrane-spanning segment. The Extracellular segment spans residues 1007 to 1008 (QP). Residues 1009–1029 (YIFLATVPGLAVFILLRAYFL) form a helical membrane-spanning segment. Residues 1030–1090 (HTSQQLKQLE…TANWFMYLAT (61 aa)) are Cytoplasmic-facing. The chain crosses the membrane as a helical span at residues 1091–1111 (LRWFQMRIDMIFVLFFIVVTF). Over 1112-1125 (ISILTTGEGEGTTG) the chain is Extracellular. Residues 1126–1146 (IILTLAMNIMSTLQWAVNSSI) traverse the membrane as a helical segment. Over 1147 to 1476 (DTDSLMRSVS…TEEEVQETRL (330 aa)) the chain is Cytoplasmic. Positions 1208 to 1439 (VKDLTVKYVD…KSVFQRALSS (232 aa)) constitute an ABC transporter 2 domain. ATP-binding positions include Tyr-1215 and 1240–1247 (GRTGSGKS). The interval 1382 to 1476 (RVLRQAFAGC…TEEEVQETRL (95 aa)) is interaction with GORASP2. Cys-1391 carries S-palmitoyl cysteine lipidation. Ser-1440 and Ser-1452 each carry phosphoserine. A compositionally biased stretch (basic residues) spans 1445–1456 (LFHGRHSSKQKP). The disordered stretch occupies residues 1445 to 1476 (LFHGRHSSKQKPRTQITAVKEETEEEVQETRL). A compositionally biased stretch (acidic residues) spans 1466–1476 (ETEEEVQETRL). Residues 1474–1476 (TRL) carry the PDZ-binding motif.

Belongs to the ABC transporter superfamily. ABCC family. CFTR transporter (TC 3.A.1.202) subfamily. As to quaternary structure, monomer; does not require oligomerization for channel activity. May form oligomers in the membrane. Interacts with SLC4A7 through NHERF1. Interacts with SHANK2. Interacts with NHERF1 and MYO6. Interacts (via C-terminus) with GOPC (via PDZ domain); this promotes CFTR internalization and thereby decreases channel activity. Interacts with SLC4A7 through NHERF1. Found in a complex with MYO5B and RAB11A. Interacts with ANO1. Interacts with SLC26A8. Interacts with AHCYL1; the interaction increases CFTR activity. Interacts with CSE1L. The core-glycosylated form interacts with GORASP2 (via PDZ GRASP-type 1 domain) in respone to ER stress. Interacts with MARCHF2; the interaction leads to CFTR ubiqtuitination and degradation. Interacts with ADGRG2. In terms of processing, N-glycosylated. Phosphorylated; cAMP treatment promotes phosphorylation and activates the channel. Dephosphorylation decreases the ATPase activity (in vitro). Phosphorylation at PKA sites activates the channel. Phosphorylation at PKC sites enhances the response to phosphorylation by PKA. Phosphorylated by AMPK; this inhibits channel activity. Post-translationally, ubiquitinated, leading to its degradation in the lysosome. Deubiquitination by USP10 in early endosomes enhances its endocytic recycling to the cell membrane. Ubiquitinated by RNF185 during ER stress. Ubiquitinated by MARCHF2. As to expression, detected in epithelial cells in nasopharynx, submandibular gland, pancreas and ileum (at protein level). Expressed in the epididymis. In the caput section of the epididymis, expressed uniformly on both the luminal and basolateral sides of the ducts and on sperm in the caput lumen (at protein level). In the cauda, detected along the luminal border but not continuously and is also expressed on the basolateral surface. Within the caudal lumen, detected on sperm.

It localises to the apical cell membrane. It is found in the early endosome membrane. The protein localises to the cell membrane. Its subcellular location is the recycling endosome membrane. The protein resides in the endoplasmic reticulum membrane. It localises to the nucleus. The catalysed reaction is ATP + H2O + closed Cl(-) channel = ADP + phosphate + open Cl(-) channel.. It carries out the reaction chloride(in) = chloride(out). The enzyme catalyses hydrogencarbonate(in) = hydrogencarbonate(out). It catalyses the reaction ATP + H2O = ADP + phosphate + H(+). Its function is as follows. Epithelial ion channel that plays an important role in the regulation of epithelial ion and water transport and fluid homeostasis. Mediates the transport of chloride ions across the cell membrane. Possesses an intrinsic ATPase activity and utilizes ATP to gate its channel; the passive flow of anions through the channel is gated by cycles of ATP binding and hydrolysis by the ATP-binding domains. The ion channel is also permeable to HCO(3)(-); selectivity depends on the extracellular chloride concentration. Exerts its function also by modulating the activity of other ion channels and transporters. Contributes to the regulation of the pH and the ion content of the epithelial fluid layer. Modulates the activity of the epithelial sodium channel (ENaC) complex, in part by regulating the cell surface expression of the ENaC complex. May regulate bicarbonate secretion and salvage in epithelial cells by regulating the transporter SLC4A7. Can inhibit the chloride channel activity of ANO1. Plays a role in the chloride and bicarbonate homeostasis during sperm epididymal maturation and capacitation. The protein is Cystic fibrosis transmembrane conductance regulator of Rattus norvegicus (Rat).